The primary structure comprises 130 residues: Protein UL145 (130 aa).

In terms of assembly, interacts with host DDB1; this interaction promotes STAT2 degradation.

Functionally, plays a role in the inhibition of host innate immunity by exploiting host DDB1-cullin RING ubiquitin ligases (CRLs). Mechanistically, recruits host DDB1 via a DCAF-like interaction motif to antagonize IFN signaling by STAT2 degradation. This chain is Protein UL145 (UL145), found in Homo sapiens (Human).